The sequence spans 1692 residues: Tyrosine-protein phosphatase non-receptor type 23 (1692 aa).

Residues 8–394 (PMIWLDLKEA…AKIEDKNEVL (387 aa)) form the BRO1 domain. 2 TPR repeats span residues 250–283 (AVAH…LNEA) and 374–407 (EEKA…DPET). Residues 552 to 639 (KAVLQNLKRI…RALTEANVQY (88 aa)) adopt a coiled-coil conformation. Disordered regions lie at residues 711-788 (DREL…PATH), 884-923 (DSVQ…PQPQ), and 944-1199 (TYSI…LLQP). T744 carries the post-translational modification Phosphothreonine. The his stretch occupies residues 773 to 1186 (HFSPGPFPSS…SSSPESQHGG (414 aa)). Positions 774–785 (FSPGPFPSSTGP) are enriched in low complexity. The span at 884–894 (DSVQAPISSHT) shows a compositional bias: polar residues. Pro residues predominate over residues 897 to 923 (RPNPTPALPQPCFPVPQPVPQSVPQPQ). R974 is subject to Omega-N-methylarginine. 21 tandem repeats follow at residues 977-978 (PQ), 979-980 (AQ), 981-982 (AQ), 983-984 (PQ), 985-986 (PQ), 987-988 (PQ), 989-990 (PQ), 991-992 (PQ), 993-994 (PQ), 995-996 (PQ), 997-998 (PQ), 999-1000 (PQ), 1001-1002 (PQ), 1003-1004 (PQ), 1005-1006 (SQ), 1007-1008 (SQ), 1009-1010 (PQ), 1011-1012 (PQ), 1013-1014 (PQ), 1015-1016 (PQ), and 1017-1018 (PQ). Residues 977–1018 (PQAQAQPQPQPQPQPQPQPQPQPQPQPQSQSQPQPQPQPQPQ) form a 21 X 2 AA approximate tandem repeats of P-Q region. The segment covering 984-1002 (QPQPQPQPQPQPQPQPQPQ) has biased composition (pro residues). 2 stretches are compositionally biased toward pro residues: residues 1093 to 1102 (FPSPGPPHPH) and 1127 to 1165 (GPPP…PPPC). S1178 and S1179 each carry phosphoserine. Residue T1187 is modified to Phosphothreonine. In terms of domain architecture, Tyrosine-protein phosphatase spans 1248–1508 (DAIWRELQEA…KFCHEALVRH (261 aa)). Catalysis depends on C1448, which acts as the Phosphocysteine intermediate. Positions 1574-1638 (ASLPGLVEPP…PSSSLELLAS (65 aa)) are disordered. Over residues 1598-1612 (SSSPPPLSSPLPEAP) the composition is skewed to pro residues. Positions 1620–1638 (VPEAPSLGPPSSSLELLAS) are enriched in low complexity. At R1671 the chain carries Omega-N-methylarginine.

It belongs to the protein-tyrosine phosphatase family. Non-receptor class subfamily. As to quaternary structure, interacts with GRAP2 and GRB2. Interacts with UBAP1 and CHMP4B.

It localises to the nucleus. The protein localises to the cytoplasm. The protein resides in the cytoplasmic vesicle. It is found in the endosome. Its subcellular location is the cytoskeleton. It localises to the cilium basal body. The catalysed reaction is O-phospho-L-tyrosyl-[protein] + H2O = L-tyrosyl-[protein] + phosphate. Its function is as follows. Plays a role in sorting of endocytic ubiquitinated cargos into multivesicular bodies (MVBs) via its interaction with the ESCRT-I complex (endosomal sorting complex required for transport I), and possibly also other ESCRT complexes. May act as a negative regulator of Ras-mediated mitogenic activity. Plays a role in ciliogenesis. The protein is Tyrosine-protein phosphatase non-receptor type 23 (Ptpn23) of Mus musculus (Mouse).